The chain runs to 196 residues: Large ribosomal subunit protein bL25 (196 aa).

It belongs to the bacterial ribosomal protein bL25 family. CTC subfamily. Part of the 50S ribosomal subunit; part of the 5S rRNA/L5/L18/L25 subcomplex. Contacts the 5S rRNA. Binds to the 5S rRNA independently of L5 and L18.

Functionally, this is one of the proteins that binds to the 5S RNA in the ribosome where it forms part of the central protuberance. The sequence is that of Large ribosomal subunit protein bL25 from Bacteroides thetaiotaomicron (strain ATCC 29148 / DSM 2079 / JCM 5827 / CCUG 10774 / NCTC 10582 / VPI-5482 / E50).